A 1744-amino-acid chain; its full sequence is Complement C4-B (1744 aa).

Positions 1-19 (MRLLWGLIWASSFFTLSLQ) are cleaved as a signal peptide. Cys-68 and Cys-97 are oxidised to a cystine. N-linked (GlcNAc...) asparagine glycosylation is present at Asn-226. Cys-635 and Cys-669 are joined by a disulfide. The propeptide occupies 676–679 (RKKR). 3 cysteine pairs are disulfide-bonded: Cys-702–Cys-728, Cys-703–Cys-735, and Cys-716–Cys-736. The 35-residue stretch at 702 to 736 (CCQDGVTRLPMMRSCEQRAARVQQPDCREPFLSCC) folds into the Anaphylatoxin-like domain. N-linked (GlcNAc...) asparagine glycosylation occurs at Asn-862. At Ser-918 the chain carries Phosphoserine. Residues 1010–1013 (CGEQ) constitute a cross-link (isoglutamyl cysteine thioester (Cys-Gln)). N-linked (GlcNAc...) asparagine glycans are attached at residues Asn-1328 and Asn-1391. 3 positions are modified to sulfotyrosine: Tyr-1417, Tyr-1420, and Tyr-1422. The propeptide occupies 1447–1453 (RRNRRRR). 5 disulfides stabilise this stretch: Cys-1471–Cys-1535, Cys-1583–Cys-1588, Cys-1595–Cys-1673, Cys-1618–Cys-1742, and Cys-1718–Cys-1727. Residues 1595–1742 (CPRQRRALER…FLQEYGTQGC (148 aa)) form the NTR domain.

In terms of assembly, in absence of complement activation, circulates in blood as a disulfide-linked trimer of an alpha, beta and gamma chain. As to quaternary structure, complement C4b is composed of complement C4b-A, complement C4 beta and complement C4 gamma chains that are associated via disulfide bonds. Non-enzymatic component of the C3 convertase, also named C4bC2b, composed of the serine protease complement C2b (C2), as well as complement C4b. Non-enzymatic component of the C5 convertase, also named C4bC2bC3b, composed of the serine protease complement C2b (C2), complement C3b, as well as complement C4b. Interacts with CR1 (via Sushi 1 and Sushi 2 domains). (Microbial infection) Binds B.burgdorferi OspC, the interaction is inhibited by complement factor C2. This binding may inhibit the complement cascade and allow the bacteria to survive in the host bloodstream. In terms of processing, prior to secretion, the single-chain precursor is enzymatically cleaved by plasminogen (PLG) to yield non-identical chains alpha, beta and gamma. During activation of the complement systems, the alpha chain is cleaved into C4a and C4b by different proteases depending on the complement pathway: C4b stays linked to the beta and gamma chains, while C4a is released in the plasma. The alpha chain is cleaved by C1S to generate C4a and C4b following activation by the classical complement system. The alpha chain is cleaved to generate C4a and C4b by MASP2 following activation by the lectin complement system. The alpha chain is cleaved by GZMK to generate C4a and C4b following activation by the GZMK complement system. Further degradation of C4b by C1 into the inactive fragments C4c and C4d blocks the generation of C3 convertase. The proteolytic cleavages often are incomplete so that many structural forms can be found in plasma. Upon activation, the internal thioester bond reacts with carbohydrate antigens on the target surface to form amide or ester bonds, leading to covalent association with the surface of pathogens. Post-translationally, complement C4b interacts with complement C3b via a thioester linkage. In terms of processing, N- and O-glycosylated. O-glycosylated with a core 1 or possibly core 8 glycan. In terms of tissue distribution, complement component C4 is expressed at highest levels in the liver, at moderate levels in the adrenal cortex, adrenal medulla, thyroid gland, and the kidney, and at lowest levels in the heart, ovary, small intestine, thymus, pancreas and spleen. The extra-hepatic sites of expression may be important for the local protection and inflammatory response.

The protein resides in the secreted. It localises to the synapse. The protein localises to the cell projection. Its subcellular location is the axon. It is found in the dendrite. The protein resides in the cell surface. In terms of biological role, precursor of non-enzymatic components of the classical, lectin and GZMK complement pathways, which consist in a cascade of proteins that leads to phagocytosis and breakdown of pathogens and signaling that strengthens the adaptive immune system. Non-enzymatic component of C3 and C5 convertases. Generated following cleavage by complement proteases (C1S, MASP2 or GZMK, depending on the complement pathway), it covalently attaches to the surface of pathogens, where it acts as an opsonin that marks the surface of antigens for removal. It then recruits the serine protease complement C2b to form the C3 and C5 convertases, which cleave and activate C3 and C5, respectively, the next components of the complement pathways. Complement C4b-B isotype catalyzes the transacylation of the thioester carbonyl group to form ester bonds with carbohydrate antigens, while C4b-A isotype is responsible for effective binding to form amide bonds with immune aggregates or protein antigens. Functionally, putative humoral mediator released following cleavage by complement proteases (C1S, MASP2 or GZMK, depending on the complement pathway). While it is strongly similar to anaphylatoxins, its role is unclear. Was reported to act as a mediator of local inflammatory process; however these effects were probably due to contamination with C3a and/C5a anaphylatoxins in biological assays. The polypeptide is Complement C4-B (Homo sapiens (Human)).